Consider the following 321-residue polypeptide: Beta-ketoacyl-[acyl-carrier-protein] synthase III (321 aa).

Residues Cys115 and His248 contribute to the active site. The tract at residues 249–253 (QANIR) is ACP-binding. Residue Asn278 is part of the active site.

It belongs to the thiolase-like superfamily. FabH family. Homodimer.

Its subcellular location is the cytoplasm. The enzyme catalyses malonyl-[ACP] + acetyl-CoA + H(+) = 3-oxobutanoyl-[ACP] + CO2 + CoA. It functions in the pathway lipid metabolism; fatty acid biosynthesis. Catalyzes the condensation reaction of fatty acid synthesis by the addition to an acyl acceptor of two carbons from malonyl-ACP. Catalyzes the first condensation reaction which initiates fatty acid synthesis and may therefore play a role in governing the total rate of fatty acid production. Possesses both acetoacetyl-ACP synthase and acetyl transacylase activities. Its substrate specificity determines the biosynthesis of branched-chain and/or straight-chain of fatty acids. This is Beta-ketoacyl-[acyl-carrier-protein] synthase III from Aromatoleum aromaticum (strain DSM 19018 / LMG 30748 / EbN1) (Azoarcus sp. (strain EbN1)).